The following is a 222-amino-acid chain: MWVKICGLQFMKDAVAAVEAGADALGFVFAPSRRQVTPERVEALISGLPPETVTVGVFVDAPMEEIRRAVTLSGLKAVQLHGSEPPEAIDQIGLPVIKAIRIRGPEDLARLPDYRNAAGLLLEPYVEGQAGGTGQTLDPTLVRWAAQTLERAGVPLAGPDEPLTPGRPKLILAGGLTPDNVADAIARAQPGGVDVSSGVENGGVKDINKIYAFVAAAKGVAR.

Belongs to the TrpF family.

It carries out the reaction N-(5-phospho-beta-D-ribosyl)anthranilate = 1-(2-carboxyphenylamino)-1-deoxy-D-ribulose 5-phosphate. It participates in amino-acid biosynthesis; L-tryptophan biosynthesis; L-tryptophan from chorismate: step 3/5. In Symbiobacterium thermophilum (strain DSM 24528 / JCM 14929 / IAM 14863 / T), this protein is N-(5'-phosphoribosyl)anthranilate isomerase.